The sequence spans 193 residues: Thioredoxin reductase-like selenoprotein T1a (193 aa).

The signal sequence occupies residues methionine 1–alanine 21. Positions cysteine 44 to selenocysteine 47 form a cross-link, cysteinyl-selenocysteine (Cys-Sec). Selenocysteine 47 is a non-standard amino acid (selenocysteine). The helical transmembrane segment at isoleucine 83–glycine 101 threads the bilayer.

This sequence belongs to the SelWTH family. Selenoprotein T subfamily. Post-translationally, may contain a selenide-sulfide bond between Cys-44 and Sec-47. This bond is speculated to serve as redox-active pair. Expressed in embryonic olfactory vesicles and the photoreceptor cell layer of the embryonic retina. Low level in embryonic epiphysis.

Its subcellular location is the endoplasmic reticulum membrane. The catalysed reaction is [thioredoxin]-dithiol + NADP(+) = [thioredoxin]-disulfide + NADPH + H(+). Selenoprotein with thioredoxin reductase-like oxidoreductase activity. This Danio rerio (Zebrafish) protein is Thioredoxin reductase-like selenoprotein T1a.